A 330-amino-acid polypeptide reads, in one-letter code: Ferredoxin--NADP reductase 2 (330 aa).

7 residues coordinate FAD: glutamate 37, glutamine 45, tyrosine 50, valine 90, phenylalanine 124, aspartate 286, and threonine 327.

It belongs to the ferredoxin--NADP reductase type 2 family. Homodimer. The cofactor is FAD.

It carries out the reaction 2 reduced [2Fe-2S]-[ferredoxin] + NADP(+) + H(+) = 2 oxidized [2Fe-2S]-[ferredoxin] + NADPH. This is Ferredoxin--NADP reductase 2 from Shouchella clausii (strain KSM-K16) (Alkalihalobacillus clausii).